The chain runs to 289 residues: Urease accessory protein UreD (289 aa).

The protein belongs to the UreD family. UreD, UreF and UreG form a complex that acts as a GTP-hydrolysis-dependent molecular chaperone, activating the urease apoprotein by helping to assemble the nickel containing metallocenter of UreC. The UreE protein probably delivers the nickel.

The protein localises to the cytoplasm. In terms of biological role, required for maturation of urease via the functional incorporation of the urease nickel metallocenter. This chain is Urease accessory protein UreD, found in Xanthobacter autotrophicus (strain ATCC BAA-1158 / Py2).